We begin with the raw amino-acid sequence, 372 residues long: Aminomethyltransferase (372 aa).

It belongs to the GcvT family. In terms of assembly, the glycine cleavage system is composed of four proteins: P, T, L and H.

The catalysed reaction is N(6)-[(R)-S(8)-aminomethyldihydrolipoyl]-L-lysyl-[protein] + (6S)-5,6,7,8-tetrahydrofolate = N(6)-[(R)-dihydrolipoyl]-L-lysyl-[protein] + (6R)-5,10-methylene-5,6,7,8-tetrahydrofolate + NH4(+). The glycine cleavage system catalyzes the degradation of glycine. The sequence is that of Aminomethyltransferase from Streptomyces avermitilis (strain ATCC 31267 / DSM 46492 / JCM 5070 / NBRC 14893 / NCIMB 12804 / NRRL 8165 / MA-4680).